Here is a 40-residue protein sequence, read N- to C-terminus: MSAGSGRIPLWVVATIAGLGVITVVGIFFYGAYAGLGSSI.

The chain crosses the membrane as a helical span at residues 8–28 (IPLWVVATIAGLGVITVVGIF).

The protein belongs to the PsbJ family. As to quaternary structure, PSII is composed of 1 copy each of membrane proteins PsbA, PsbB, PsbC, PsbD, PsbE, PsbF, PsbH, PsbI, PsbJ, PsbK, PsbL, PsbM, PsbT, PsbX, PsbY, PsbZ, Psb30/Ycf12, peripheral proteins PsbO, CyanoQ (PsbQ), PsbU, PsbV and a large number of cofactors. It forms dimeric complexes.

It is found in the cellular thylakoid membrane. One of the components of the core complex of photosystem II (PSII). PSII is a light-driven water:plastoquinone oxidoreductase that uses light energy to abstract electrons from H(2)O, generating O(2) and a proton gradient subsequently used for ATP formation. It consists of a core antenna complex that captures photons, and an electron transfer chain that converts photonic excitation into a charge separation. The protein is Photosystem II reaction center protein J of Trichormus variabilis (strain ATCC 29413 / PCC 7937) (Anabaena variabilis).